A 517-amino-acid polypeptide reads, in one-letter code: Probable bifunctional methylthioribulose-1-phosphate dehydratase/enolase-phosphatase E1 (517 aa).

A methylthioribulose-1-phosphate dehydratase region spans residues 1–242 (MACSGCSCEA…CIKLYQLGID (242 aa)). Cysteine 114 is a binding site for substrate. The Zn(2+) site is built by histidine 132 and histidine 134. The active-site Proton donor/acceptor; for methylthioribulose-1-phosphate dehydratase activity is glutamate 157. Zn(2+) is bound at residue histidine 207. An enolase-phosphatase E1 region spans residues 278–517 (VVLDIEGTTT…FRTIKSFSEI (240 aa)). 2 residues coordinate Mg(2+): aspartate 281 and glutamate 283. Substrate contacts are provided by residues 416–417 (SS) and lysine 450. Mg(2+) is bound at residue aspartate 476.

This sequence in the N-terminal section; belongs to the aldolase class II family. MtnB subfamily. It in the C-terminal section; belongs to the HAD-like hydrolase superfamily. MasA/MtnC family. Zn(2+) is required as a cofactor. Mg(2+) serves as cofactor.

It carries out the reaction 5-(methylsulfanyl)-D-ribulose 1-phosphate = 5-methylsulfanyl-2,3-dioxopentyl phosphate + H2O. The enzyme catalyses 5-methylsulfanyl-2,3-dioxopentyl phosphate + H2O = 1,2-dihydroxy-5-(methylsulfanyl)pent-1-en-3-one + phosphate. It functions in the pathway amino-acid biosynthesis; L-methionine biosynthesis via salvage pathway; L-methionine from S-methyl-5-thio-alpha-D-ribose 1-phosphate: step 2/6. The protein operates within amino-acid biosynthesis; L-methionine biosynthesis via salvage pathway; L-methionine from S-methyl-5-thio-alpha-D-ribose 1-phosphate: step 3/6. Its pathway is amino-acid biosynthesis; L-methionine biosynthesis via salvage pathway; L-methionine from S-methyl-5-thio-alpha-D-ribose 1-phosphate: step 4/6. The protein is Probable bifunctional methylthioribulose-1-phosphate dehydratase/enolase-phosphatase E1 of Zea mays (Maize).